Here is a 106-residue protein sequence, read N- to C-terminus: UPF0145 protein Athe_0545 (106 aa).

This sequence belongs to the UPF0145 family.

In Caldicellulosiruptor bescii (strain ATCC BAA-1888 / DSM 6725 / KCTC 15123 / Z-1320) (Anaerocellum thermophilum), this protein is UPF0145 protein Athe_0545.